The sequence spans 218 residues: Host range factor 1 (218 aa).

Functionally, facilitates AcMNPV replication in two non-permissive cell lines, IPLB-Ld652Y and IPLB-LdFB. This Lepidoptera (butterflies and moths) protein is Host range factor 1 (HRF-1).